A 522-amino-acid chain; its full sequence is MTPNIHHDKILILDFGAQYTQLIARRIREIGVYCEVWPWDHSPEEILSFGAKGIILSGGPESTTSPGAPAAPQHVFDSDLPIFGICYGMQTMAVHLGGATEAADKREFGHASVQVIYPDTLFSGLSDHPSEFRLDVWMSHGDHVSRVPPCFTITAATDRIPIAAMSREDKRWYGVQFHPEVTHTLQGQALLRRFVVDICGCQTLWTSANIIEDQIARVRERVGCDEVILGLSGGVDSSVVAALLHKAIGSQLTCVFVDTGMLRWGEGDQVMAMFAEHMGVNVVRINAASRYFDALQGVYDPEAKRKIIGNLFIQIFEEEASKRKQAKWLAQGTIYPDVIESAGSKTGKAHVIKSHHNVGGLPEQMTLGMVEPLRELFKDEVRRLGVALGLPHAMVYRHPFPGPGLGVRILGEVKPEYAELLAKADSIFIDELHQADLYDKVSQAFAVFLPVKSVGVVGDARAYEWVIALRAVETVDFMTAHWAPLPYDFLSTVSNRIINELRGVSRVVYDISGKPPATIEWE.

The Glutamine amidotransferase type-1 domain occupies 9–204; sequence KILILDFGAQ…VVDICGCQTL (196 aa). Cys-86 functions as the Nucleophile in the catalytic mechanism. Residues His-178 and Glu-180 contribute to the active site. One can recognise a GMPS ATP-PPase domain in the interval 205–397; sequence WTSANIIEDQ…LGLPHAMVYR (193 aa). 232-238 lines the ATP pocket; that stretch reads SGGVDSS.

Homodimer.

The catalysed reaction is XMP + L-glutamine + ATP + H2O = GMP + L-glutamate + AMP + diphosphate + 2 H(+). Its pathway is purine metabolism; GMP biosynthesis; GMP from XMP (L-Gln route): step 1/1. Its function is as follows. Catalyzes the synthesis of GMP from XMP. The polypeptide is GMP synthase [glutamine-hydrolyzing] (Xylella fastidiosa (strain M23)).